Reading from the N-terminus, the 274-residue chain is Bis(5'-nucleosyl)-tetraphosphatase, symmetrical (274 aa).

This sequence belongs to the Ap4A hydrolase family.

The enzyme catalyses P(1),P(4)-bis(5'-adenosyl) tetraphosphate + H2O = 2 ADP + 2 H(+). Hydrolyzes diadenosine 5',5'''-P1,P4-tetraphosphate to yield ADP. The polypeptide is Bis(5'-nucleosyl)-tetraphosphatase, symmetrical (Shewanella sp. (strain MR-4)).